Consider the following 92-residue polypeptide: Protein S100-B (92 aa).

The residue at position 2 (serine 2) is a Blocked amino end (Ser); alternate. Serine 2 is subject to N-acetylserine; alternate. EF-hand domains are found at residues 13 to 48 (DVFHQYSGREGDKHKLKKSELKELINNELSHFLEEI) and 49 to 84 (KEQEVVDKVMETLDNDGDGECDFQEFMAFVAMVTTA). Histidine 16 contacts Zn(2+). Ca(2+) is bound by residues serine 19, glutamate 22, and aspartate 24. A Zn(2+)-binding site is contributed by histidine 26. Lysine 27, glutamate 32, aspartate 62, aspartate 64, aspartate 66, glutamate 68, and glutamate 73 together coordinate Ca(2+). Histidine 86 and histidine 91 together coordinate Zn(2+).

It belongs to the S-100 family. In terms of assembly, dimer of either two alpha chains, or two beta chains, or one alpha and one beta chain. The S100B dimer binds two molecules of STK38. Interacts with CACYBP in a calcium-dependent manner. Interacts with ATAD3A; this interaction probably occurs in the cytosol prior to ATAD3A mitochondrial targeting. Interacts with S100A6. The S100B dimer interacts with two molecules of CAPZA1. Interacts with AGER. Interacts with PPP5C (via TPR repeats); the interaction is calcium-dependent and modulates PPP5C activity. Interacts with TPPP; this interaction inhibits TPPP dimerization. Interacts with isoform CLSTN3beta of CLSTN3; interaction promotes secretion. Although predominant among the water-soluble brain proteins, S100 is also found in a variety of other tissues.

The protein localises to the cytoplasm. It localises to the nucleus. Its subcellular location is the secreted. Its function is as follows. Small zinc- and- and calcium-binding protein that is highly expressed in astrocytes and constitutes one of the most abundant soluble proteins in brain. Weakly binds calcium but binds zinc very tightly-distinct binding sites with different affinities exist for both ions on each monomer. Physiological concentrations of potassium ion antagonize the binding of both divalent cations, especially affecting high-affinity calcium-binding sites. Acts as a neurotrophic factor that promotes astrocytosis and axonal proliferation. Involved in innervation of thermogenic adipose tissue by acting as an adipocyte-derived neurotrophic factor that promotes sympathetic innervation of adipose tissue. Binds to and initiates the activation of STK38 by releasing autoinhibitory intramolecular interactions within the kinase. Interaction with AGER after myocardial infarction may play a role in myocyte apoptosis by activating ERK1/2 and p53/TP53 signaling. Could assist ATAD3A cytoplasmic processing, preventing aggregation and favoring mitochondrial localization. May mediate calcium-dependent regulation on many physiological processes by interacting with other proteins, such as TPR-containing proteins, and modulating their activity. This chain is Protein S100-B, found in Homo sapiens (Human).